Reading from the N-terminus, the 634-residue chain is Sodium-dependent neutral amino acid transporter B(0)AT1 (634 aa).

Residues 1-41 (MVRLVLPNPGLEDRIPSLDELEVIEKEEASSRPKWDNKAQY) lie on the Cytoplasmic side of the membrane. S17 bears the Phosphoserine mark. Residues 42–62 (MLTCVGFCVGLGNVWRFPYLC) form a helical membrane-spanning segment. Topologically, residues 63 to 65 (QSH) are extracellular. Residues 66-86 (GGGAFMIPFLILLVLEGIPLL) form a helical membrane-spanning segment. Over 87-119 (HLEFAIGQRLRKGSVGVWSSIHPALKGVGIASM) the chain is Cytoplasmic. Residues 120–140 (FVSFMVGLYYNTIIAWVMWYF) form a helical membrane-spanning segment. At 141–192 (FNSFQEPLPWSECPLNQNQTGYVEECAKSSSVDYFWYRETLNISTSISDSGS) the chain is on the extracellular side. N158 and N182 each carry an N-linked (GlcNAc...) asparagine glycan. Residues 193 to 213 (IQWWILLCLTCAWSVLYVCTI) traverse the membrane as a helical segment. At 214-221 (RGIETTGK) the chain is on the cytoplasmic side. A helical transmembrane segment spans residues 222–242 (AVYITSTLPYVVLTIFLIRGL). Residues 243 to 268 (TLKGATNGIVFLFTPNITELSNPNTW) lie on the Extracellular side of the membrane. An N-linked (GlcNAc...) asparagine glycan is attached at N258. Residues 269–289 (LDAGAQVFYSFSLAFGGLISF) form a helical membrane-spanning segment. Topologically, residues 290–304 (SSYNSVHNNCEMDSV) are cytoplasmic. Residues 305–325 (IVSIINGFTSVYAATVVYSII) form a helical membrane-spanning segment. At 326 to 413 (GFRATERFDD…TEAITKMPVS (88 aa)) the chain is on the extracellular side. N354 and N368 each carry an N-linked (GlcNAc...) asparagine glycan. A helical transmembrane segment spans residues 414–434 (PLWSVLFFIMLFCLGLSSMFG). Topologically, residues 435-456 (NMEGVVVPLQDLNITPKKWPKE) are cytoplasmic. A helical membrane pass occupies residues 457–477 (LLTGLICLGTYLIAFIFTLNS). Topologically, residues 478–490 (GQYWLSLLDSYAG) are extracellular. Residues 491–511 (SIPLLIIAFCEMFAVVYVYGV) traverse the membrane as a helical segment. Over 512–531 (DRFNKDIEFMIGHKPNIFWQ) the chain is Cytoplasmic. A helical membrane pass occupies residues 532–552 (VTWRVVSPLIMLVIFLFFFVI). Topologically, residues 553–581 (EVNKQLMYSVWDPDYEEFPKSQKVPYPDW) are extracellular. A helical transmembrane segment spans residues 582 to 602 (VYAVVVIVAGVPCLTIPCFAI). The Cytoplasmic portion of the chain corresponds to 603 to 634 (YKLIRNYCQKSGDQHGLVNALSTASVNGDLKN). S627 bears the Phosphoserine mark.

The protein belongs to the sodium:neurotransmitter symporter (SNF) (TC 2.A.22) family. SLC6A19 subfamily. In terms of assembly, interacts in a tissue-specific manner with ACE2 in small intestine and with CLTRN in the kidney. Interacts with CLTRN; this interaction is required for trafficking of SLC6A19 to the plasma membrane and for its catalytic activation in kidneys. Interacts with ACE2; this interaction is required for trafficking of SLC6A19 to the plasma membrane and for its catalytic activation in intestine. Interacts with ANPEP; the interaction positively regulates its amino acid transporter activity.

It is found in the membrane. It carries out the reaction L-alanine(in) + Na(+)(in) = L-alanine(out) + Na(+)(out). The enzyme catalyses L-cysteine(in) + Na(+)(in) = L-cysteine(out) + Na(+)(out). The catalysed reaction is L-glutamine(in) + Na(+)(in) = L-glutamine(out) + Na(+)(out). It catalyses the reaction glycine(in) + Na(+)(in) = glycine(out) + Na(+)(out). It carries out the reaction L-isoleucine(in) + Na(+)(in) = L-isoleucine(out) + Na(+)(out). The enzyme catalyses L-leucine(in) + Na(+)(in) = L-leucine(out) + Na(+)(out). The catalysed reaction is L-methionine(in) + Na(+)(in) = L-methionine(out) + Na(+)(out). It catalyses the reaction L-phenylalanine(in) + Na(+)(in) = L-phenylalanine(out) + Na(+)(out). It carries out the reaction L-serine(in) + Na(+)(in) = L-serine(out) + Na(+)(out). The enzyme catalyses L-tryptophan(in) + Na(+)(in) = L-tryptophan(out) + Na(+)(out). The catalysed reaction is L-tyrosine(in) + Na(+)(in) = L-tyrosine(out) + Na(+)(out). It catalyses the reaction L-valine(in) + Na(+)(in) = L-valine(out) + Na(+)(out). In terms of biological role, transporter that mediates resorption of neutral amino acids across the apical membrane of renal and intestinal epithelial cells. This uptake is sodium-dependent and chloride-independent. Requires CLTRN in kidney or ACE2 in intestine for cell surface expression and amino acid transporter activity. The protein is Sodium-dependent neutral amino acid transporter B(0)AT1 of Rattus norvegicus (Rat).